Reading from the N-terminus, the 568-residue chain is 2-isopropylmalate synthase (568 aa).

The 277-residue stretch at 37 to 313 folds into the Pyruvate carboxyltransferase domain; that stretch reads PRWLSTDLRD…DPMIDFSNID (277 aa). Mg(2+)-binding residues include aspartate 46, histidine 252, histidine 254, and asparagine 288. The regulatory domain stretch occupies residues 455-568; sequence EGVVGVMAYR…CSAVNRAQQS (114 aa).

This sequence belongs to the alpha-IPM synthase/homocitrate synthase family. LeuA type 2 subfamily. In terms of assembly, homodimer. Mg(2+) is required as a cofactor.

Its subcellular location is the cytoplasm. The catalysed reaction is 3-methyl-2-oxobutanoate + acetyl-CoA + H2O = (2S)-2-isopropylmalate + CoA + H(+). Its pathway is amino-acid biosynthesis; L-leucine biosynthesis; L-leucine from 3-methyl-2-oxobutanoate: step 1/4. Catalyzes the condensation of the acetyl group of acetyl-CoA with 3-methyl-2-oxobutanoate (2-ketoisovalerate) to form 3-carboxy-3-hydroxy-4-methylpentanoate (2-isopropylmalate). The sequence is that of 2-isopropylmalate synthase from Thermobifida fusca (strain YX).